Here is a 153-residue protein sequence, read N- to C-terminus: Acylphosphatase-like protein MJ0553 (153 aa).

Positions 4–102 constitute an Acylphosphatase-like domain; the sequence is TYELIIYGRV…SRLSSDDILE (99 aa).

The chain is Acylphosphatase-like protein MJ0553 from Methanocaldococcus jannaschii (strain ATCC 43067 / DSM 2661 / JAL-1 / JCM 10045 / NBRC 100440) (Methanococcus jannaschii).